Reading from the N-terminus, the 65-residue chain is Bacteriocin amylovorin-L (65 aa).

The propeptide occupies 1–15; the sequence is MKQLNSEQLQNIIGG. The helical transmembrane segment at 39–59 threads the bilayer; that stretch reads LGGVWGAVIGGVGGAAVCGLA.

Active lactobin is composed of two different peptides, one which is lactobin A.

The protein localises to the secreted. Its subcellular location is the host cell membrane. Its function is as follows. This heat stable bacteriocin inhibits the growth of closely related Lactobacillus species. It may act as a pore-forming protein, creating a channel in the cell membrane. It kills Lactobacillus helveticus ATCC 15009, but displays no activity towards Listeria species. This chain is Bacteriocin amylovorin-L (amyL), found in Lactobacillus amylovorus.